Reading from the N-terminus, the 556-residue chain is Formate--tetrahydrofolate ligase (556 aa).

Residue 65-72 (TAAGEGKS) coordinates ATP.

The protein belongs to the formate--tetrahydrofolate ligase family.

It catalyses the reaction (6S)-5,6,7,8-tetrahydrofolate + formate + ATP = (6R)-10-formyltetrahydrofolate + ADP + phosphate. It functions in the pathway one-carbon metabolism; tetrahydrofolate interconversion. The polypeptide is Formate--tetrahydrofolate ligase (Elusimicrobium minutum (strain Pei191)).